We begin with the raw amino-acid sequence, 484 residues long: Rho guanine nucleotide exchange factor 35 (484 aa).

The segment at 139-418 is disordered; that stretch reads FSSDLGSEEE…ALIAPEDSPH (280 aa). Ser184 carries the phosphoserine modification. Residues 217–237 show a composition bias toward low complexity; it reads ESQGLLHPQEVQVLEEQGQQE. The segment covering 266 to 278 has biased composition (basic and acidic residues); the sequence is NDEKGEQKQKQEQ. Residues 299 to 309 show a composition bias toward acidic residues; the sequence is GLNDGEWEQED. Composition is skewed to basic and acidic residues over residues 323–368 and 394–404; these read GEER…KEKG and RSREEENEHHG.

This chain is Rho guanine nucleotide exchange factor 35 (ARHGEF35), found in Homo sapiens (Human).